Here is a 441-residue protein sequence, read N- to C-terminus: Phenoloxidase-activating enzyme (441 aa).

Positions 1 to 21 (MFLIWTFIVAVLAIQTKSVVA) are cleaved as a signal peptide. Residue Gln22 is modified to Pyrrolidone carboxylic acid. Clip domains lie at 23–76 (SCRT…AVCC) and 77–127 (PCNA…SICC). 8 cysteine pairs are disulfide-bonded: Cys24–Cys75, Cys34–Cys65, Cys40–Cys76, Cys78–Cys126, Cys88–Cys117, Cys94–Cys127, Cys164–Cys305, and Cys203–Cys219. The Peptidase S1 domain occupies 174 to 440 (IVGGAPASID…YLPWIQNTIE (267 aa)). Residue His218 is the Charge relay system of the active site. The Ca(2+) site is built by Glu237, Asn239, Asn242, and Asp246. A glycan (N-linked (GlcNAc...) asparagine) is linked at Asn239. Residue Asp285 is the Charge relay system of the active site. Asn334 carries N-linked (GlcNAc...) asparagine glycosylation. Cystine bridges form between Cys356/Cys377 and Cys387/Cys416. Ser391 acts as the Charge relay system in catalysis.

Belongs to the peptidase S1 family. CLIP subfamily. As to quaternary structure, in the active form, heterodimer of a light chain and a heavy chain; disulfide-linked. Post-translationally, proteolytically cleaved for activation. Cleavage produces a light chain and a catalytic heavy chain which remains covalently associated probably through an interchain disulfide bond. In terms of processing, glycosylated.

With respect to regulation, stabilized by calcium. Inhibited by di-isopropyl phosphorofluoridate (DFP), phenylmethanesulfonylfluoride (PMSF), p-nitrophenyl-p'-guanidinobenzonate (p-NPGB), p-chloromercuribenzoate (PCMB), ethylenediaminetetraacetic acid (EDTA), urea and CI-13c. In terms of biological role, endopeptidase with selective post-Arg cleavage site. Activates prophenoloxidase. Has a probable role in the melanization process as part of the innate immune response. This chain is Phenoloxidase-activating enzyme, found in Bombyx mori (Silk moth).